Consider the following 378-residue polypeptide: MNAPTTFADSVTVPVSLGDRSYDILIGKGLVERAGEEVAKRLKGVRVAIVTDENVAAVHLERLQASFARAGIDSTPVIVAPGEKSKSFATLETVTNAILVAKLERGDAVVALGGGVVGDLSGFVAGIVRRGMNFVQMPTSLLAQVDSSVGGKTGINTAHGKNLVGVFNQPQLVLADTQVLDTLSPREFRAGYAEVAKYGLIDRPDFFAWLEANWQEVFSGGAARTKAIAESCRSKAAVVARDERETGDRALLNLGHTFGHALESATGYDSSRLVHGEGVAIGMALAYRFSARMNLAGIEAAERVEAHLKAVGLPVSLAEVPGGLPPAEKLMDYIAQDKKVTRGTLTFILTHGIGQSFIAKDVPPAAVLEFLKERLAIA.

Residues 115–119 (GVVGD), 139–140 (TS), K152, and K161 contribute to the NAD(+) site. Residues E194, H256, and H275 each contribute to the Zn(2+) site.

Belongs to the sugar phosphate cyclases superfamily. Dehydroquinate synthase family. Requires Co(2+) as cofactor. Zn(2+) serves as cofactor. The cofactor is NAD(+).

It localises to the cytoplasm. It carries out the reaction 7-phospho-2-dehydro-3-deoxy-D-arabino-heptonate = 3-dehydroquinate + phosphate. It functions in the pathway metabolic intermediate biosynthesis; chorismate biosynthesis; chorismate from D-erythrose 4-phosphate and phosphoenolpyruvate: step 2/7. Its function is as follows. Catalyzes the conversion of 3-deoxy-D-arabino-heptulosonate 7-phosphate (DAHP) to dehydroquinate (DHQ). The sequence is that of 3-dehydroquinate synthase from Brucella abortus biovar 1 (strain 9-941).